Here is a 257-residue protein sequence, read N- to C-terminus: Small ribosomal subunit protein eS1 (257 aa).

The disordered stretch occupies residues 237–257 (GADGEKVDRPDDYEPPVQQEV). Residues 239 to 248 (DGEKVDRPDD) are compositionally biased toward basic and acidic residues.

It belongs to the eukaryotic ribosomal protein eS1 family. Component of the small ribosomal subunit. Mature ribosomes consist of a small (40S) and a large (60S) subunit. The 40S subunit contains about 33 different proteins and 1 molecule of RNA (18S). The 60S subunit contains about 49 different proteins and 3 molecules of RNA (28S, 5.8S and 5S).

The protein localises to the cytoplasm. This Caenorhabditis elegans protein is Small ribosomal subunit protein eS1.